A 295-amino-acid polypeptide reads, in one-letter code: Ribosomal protein L11 methyltransferase (295 aa).

The S-adenosyl-L-methionine site is built by threonine 146, glycine 167, aspartate 189, and asparagine 231.

It belongs to the methyltransferase superfamily. PrmA family.

Its subcellular location is the cytoplasm. The enzyme catalyses L-lysyl-[protein] + 3 S-adenosyl-L-methionine = N(6),N(6),N(6)-trimethyl-L-lysyl-[protein] + 3 S-adenosyl-L-homocysteine + 3 H(+). Functionally, methylates ribosomal protein L11. This is Ribosomal protein L11 methyltransferase from Vibrio cholerae serotype O1 (strain ATCC 39541 / Classical Ogawa 395 / O395).